Here is a 708-residue protein sequence, read N- to C-terminus: F-box protein MAX2 homolog A (708 aa).

One can recognise an F-box domain in the interval 2–49 (ATQLNDLPDVILSNIIAAVTDVRSRNSTSFVCRKWLVLERSTRVSLTL).

As to quaternary structure, part of a putative SCF (SKP1/Cullin/F-box) ubiquitin ligase complex. Interacts with DAD2. Interacts with KAI2IA in the presence of (-)-germacrene D. In terms of tissue distribution, mainly expressed in fully expanded leaves, lateral roots, axillary and shoot apex, and, to a lower extent, in internodes and nodes.

The protein localises to the nucleus. Its function is as follows. Component of SCF(ASK-cullin-F-box) E3 ubiquitin ligase complexes, which may mediate the ubiquitination and subsequent proteasomal degradation of target proteins. Is necessary for responses to strigolactones and may be involved in the ubiquitin-mediated degradation of specific proteins that activate axillary growth. Targets probably SMAX1A to degradation upon the formation of an E3 SCF ubiquitin ligase complex (ASK-cullin-F-box) containing MAX2A and KAI2IA in response to (-)-germacrene D in the stigma. The polypeptide is F-box protein MAX2 homolog A (Petunia hybrida (Petunia)).